We begin with the raw amino-acid sequence, 558 residues long: Glucose-6-phosphate isomerase (558 aa).

The active-site Proton donor is E362. Residues H393 and K523 contribute to the active site.

It belongs to the GPI family.

It localises to the cytoplasm. The enzyme catalyses alpha-D-glucose 6-phosphate = beta-D-fructose 6-phosphate. It functions in the pathway carbohydrate degradation; glycolysis; D-glyceraldehyde 3-phosphate and glycerone phosphate from D-glucose: step 2/4. The chain is Glucose-6-phosphate isomerase (Pgi) from Drosophila yakuba (Fruit fly).